Here is a 545-residue protein sequence, read N- to C-terminus: Cytochrome P450 monooxygenase 212 (545 aa).

A signal peptide spans 1-14 (MAAYAWLYCALALG). C486 serves as a coordination point for heme.

This sequence belongs to the cytochrome P450 family. Heme is required as a cofactor.

It participates in secondary metabolite biosynthesis. Its function is as follows. Cytochrome P450 monooxygenase that is able to use anthracene and pyrene as substrates for oxidation. This Postia placenta (strain ATCC 44394 / Madison 698-R) (Brown rot fungus) protein is Cytochrome P450 monooxygenase 212.